The primary structure comprises 69 residues: MLLYIVIIVACIISKLVPNEYWAIHLFFIIMIFMVYMYEKLDIHQKYQFWNYTMSGLSGHNVQVICKCY.

Topologically, residues 1-15 (MLLYIVIIVACIISK) are cytoplasmic. The chain crosses the membrane as a helical span at residues 16–36 (LVPNEYWAIHLFFIIMIFMVY). Topologically, residues 37–69 (MYEKLDIHQKYQFWNYTMSGLSGHNVQVICKCY) are extracellular. An N-linked (GlcNAc...) asparagine; by host glycan is attached at Asn-51.

The protein belongs to the asfivirus X69R family.

The protein resides in the host membrane. This is an uncharacterized protein from Ornithodoros (relapsing fever ticks).